The primary structure comprises 364 residues: Chorismate synthase (364 aa).

NADP(+) is bound at residue R47. FMN is bound by residues 125–127, G288, 303–307, and R329; these read RAS and KPTAT.

This sequence belongs to the chorismate synthase family. Homotetramer. Requires FMNH2 as cofactor.

It carries out the reaction 5-O-(1-carboxyvinyl)-3-phosphoshikimate = chorismate + phosphate. It participates in metabolic intermediate biosynthesis; chorismate biosynthesis; chorismate from D-erythrose 4-phosphate and phosphoenolpyruvate: step 7/7. In terms of biological role, catalyzes the anti-1,4-elimination of the C-3 phosphate and the C-6 proR hydrogen from 5-enolpyruvylshikimate-3-phosphate (EPSP) to yield chorismate, which is the branch point compound that serves as the starting substrate for the three terminal pathways of aromatic amino acid biosynthesis. This reaction introduces a second double bond into the aromatic ring system. This Synechococcus sp. (strain CC9605) protein is Chorismate synthase.